Reading from the N-terminus, the 155-residue chain is Large ribosomal subunit protein uL22 (155 aa).

Residues 109-155 form a disordered region; sequence HITVIVESRPPKKAGKQGASASAARARRAQASKAATKKATDSKEGSE. The span at 146-155 shows a compositional bias: basic and acidic residues; the sequence is KATDSKEGSE.

The protein belongs to the universal ribosomal protein uL22 family. Part of the 50S ribosomal subunit.

In terms of biological role, this protein binds specifically to 23S rRNA; its binding is stimulated by other ribosomal proteins, e.g. L4, L17, and L20. It is important during the early stages of 50S assembly. It makes multiple contacts with different domains of the 23S rRNA in the assembled 50S subunit and ribosome. Functionally, the globular domain of the protein is located near the polypeptide exit tunnel on the outside of the subunit, while an extended beta-hairpin is found that lines the wall of the exit tunnel in the center of the 70S ribosome. In Mycolicibacterium vanbaalenii (strain DSM 7251 / JCM 13017 / BCRC 16820 / KCTC 9966 / NRRL B-24157 / PYR-1) (Mycobacterium vanbaalenii), this protein is Large ribosomal subunit protein uL22.